We begin with the raw amino-acid sequence, 230 residues long: Ribose-5-phosphate isomerase A (230 aa).

Residues 32–35 (TGST), 85–88 (DGAD), and 98–101 (KGGG) contribute to the substrate site. The active-site Proton acceptor is the Glu107. Lys125 is a binding site for substrate.

This sequence belongs to the ribose 5-phosphate isomerase family. As to quaternary structure, homodimer.

It catalyses the reaction aldehydo-D-ribose 5-phosphate = D-ribulose 5-phosphate. It functions in the pathway carbohydrate degradation; pentose phosphate pathway; D-ribose 5-phosphate from D-ribulose 5-phosphate (non-oxidative stage): step 1/1. Catalyzes the reversible conversion of ribose-5-phosphate to ribulose 5-phosphate. The sequence is that of Ribose-5-phosphate isomerase A from Burkholderia vietnamiensis (strain G4 / LMG 22486) (Burkholderia cepacia (strain R1808)).